Here is a 553-residue protein sequence, read N- to C-terminus: Coiled-coil domain-containing protein 22 homolog (553 aa).

The interval 236 to 264 (DSEEPAPPPISTVKPDASAEEEASPIQEL) is disordered. Coiled-coil stretches lie at residues 261–286 (IQEL…KAHA), 314–407 (ERTS…QSLA), and 498–549 (NVTK…VEQP).

It belongs to the CCDC22 family.

The protein is Coiled-coil domain-containing protein 22 homolog of Drosophila erecta (Fruit fly).